We begin with the raw amino-acid sequence, 82 residues long: MDFMNFFILGADLPTLGGVKGWASDVVIQFITIVVMFIAAKNLMKLKMGGIIFVCCIGSAVTWVIKHWSEFSGWINALMEKL.

2 helical membrane passes run 22-39 (WASDVVIQFITIVVMFIA) and 46-65 (LKMGGIIFVCCIGSAVTWVI).

It is found in the cell membrane. This is an uncharacterized protein from Bacillus subtilis (strain 168).